A 466-amino-acid polypeptide reads, in one-letter code: MQDVIFFDQRPRPDRDQTPRERRYYVWTVGCQMNISDSERLEAALQGVGYSPATRPEDASFIVLNSCSVRASAEERILGKLGELVRVKRQHPDTRIVLWGCMVGPNNRSIFADQLPMVDHFVSPSAVDEVVALAPNPIYTLDEPALPVRDWSHPPVSVHVPIQYGCNMTCSYCVIPLRRGRERSRPLAEIVEEVRRIVARGAKEITLLGQIVDSWGHDLPGRPELADLLEAVDPTPGLLRLRFLTSHPAWMTDRLIETVARLPRCQPEINLPVQAGSDRVLKLMRRGYTVARYKTLIARIRAAIPDISLTTDIIVGHPGETEDDFRQTMDLCAEIGFDKVHIAAFSARPGTRAAEQEQDPALAVPPAVKEERRRRLEQLQEQIATERMARFLGQTVEVLVEGESKGKWRGRTPGNRLVFFSHPADLTGQLVPVKITATSPWSLQGVPQLDDSVNAQSKENGLVKAR.

The region spanning 22–139 (RRYYVWTVGC…VVALAPNPIY (118 aa)) is the MTTase N-terminal domain. C31, C67, C101, C166, C170, and C173 together coordinate [4Fe-4S] cluster. One can recognise a Radical SAM core domain in the interval 152-386 (SHPPVSVHVP…EQLQEQIATE (235 aa)). A TRAM domain is found at 389–449 (ARFLGQTVEV…PWSLQGVPQL (61 aa)).

This sequence belongs to the methylthiotransferase family. MiaB subfamily. Monomer. Requires [4Fe-4S] cluster as cofactor.

It is found in the cytoplasm. The catalysed reaction is N(6)-dimethylallyladenosine(37) in tRNA + (sulfur carrier)-SH + AH2 + 2 S-adenosyl-L-methionine = 2-methylsulfanyl-N(6)-dimethylallyladenosine(37) in tRNA + (sulfur carrier)-H + 5'-deoxyadenosine + L-methionine + A + S-adenosyl-L-homocysteine + 2 H(+). Its function is as follows. Catalyzes the methylthiolation of N6-(dimethylallyl)adenosine (i(6)A), leading to the formation of 2-methylthio-N6-(dimethylallyl)adenosine (ms(2)i(6)A) at position 37 in tRNAs that read codons beginning with uridine. The sequence is that of tRNA-2-methylthio-N(6)-dimethylallyladenosine synthase from Chloroflexus aurantiacus (strain ATCC 29366 / DSM 635 / J-10-fl).